Reading from the N-terminus, the 765-residue chain is Cullin-5 (765 aa).

In terms of domain architecture, Cullin neddylation spans 696–757 (RELRVQEGIV…NKYMERRADD (62 aa)). K709 is covalently cross-linked (Glycyl lysine isopeptide (Lys-Gly) (interchain with G-Cter in NEDD8)).

The protein belongs to the cullin family. As to quaternary structure, interacts with rbx-1 and rbx-2. In terms of processing, neddylated; which enhances the ubiquitination activity of SCF-like complex.

It functions in the pathway protein modification; protein ubiquitination. Probable core component of cullin-based SCF-like E3 ubiquitin-protein ligase complexes which mediate the ubiquitination and subsequent proteasomal degradation of target proteins. In association with rbx-2 seems to be involved in meiotic cell cycle progression in the germline. Required for phosphorylation of the MAP kinase MPK-1 in the germline. In Caenorhabditis elegans, this protein is Cullin-5 (cul-5).